Here is a 1451-residue protein sequence, read N- to C-terminus: Cleavage and polyadenylation specificity factor subunit 1 (1451 aa).

2 stretches are compositionally biased toward basic and acidic residues: residues 401-422 (QETPMEEGKENEEKEKQEEPPN) and 561-572 (EEKREPTIEDDK). 3 disordered regions span residues 401-432 (QETPMEEGKENEEKEKQEEPPNKKKRVDSNWA), 548-572 (EKPSAEGDGESPEEEKREPTIEDDK), and 753-789 (GESNPLTSPNKEESSRGSAAASSAHTGKESGSGRQEP). A Nuclear localization signal motif is present at residues 901-916 (KKMPHNINYREKKVKV).

Belongs to the CPSF1 family.

The protein localises to the nucleus. The protein resides in the nucleoplasm. Its function is as follows. Component of the cleavage and polyadenylation specificity factor (CPSF) complex that plays a key role in pre-mRNA 3'-end formation, recognizing the AAUAAA signal sequence and interacting with poly(A) polymerase and other factors to bring about cleavage and poly(A) addition. This subunit is involved in the RNA recognition step of the polyadenylation reaction. Plays a role in eye morphogenesis and the development of retinal ganglion cell projections to the tectum. The protein is Cleavage and polyadenylation specificity factor subunit 1 (cpsf1) of Danio rerio (Zebrafish).